Consider the following 702-residue polypeptide: Nucleolar and coiled-body phosphoprotein 1 (702 aa).

One can recognise a LisH domain in the interval 10 to 42 (VPSDLYPLVLRFLRDSQLSEVASKFAKATGATQ). At Lys-33 the chain carries N6-acetyllysine. Positions 65 to 635 (PKVKLQSNGP…SPFRRVREEE (571 aa)) are disordered. Glycyl lysine isopeptide (Lys-Gly) (interchain with G-Cter in SUMO2) cross-links involve residues Lys-68 and Lys-77. 2 Acidic serine cluster repeats span residues 85-96 (SSDSSEDSSEDE) and 130-141 (ESSSSEESSEEE). Residues 85–566 (SSDSSEDSSE…GKAAKESEEE (482 aa)) form an 11 X 12 AA approximate repeats of an acidic serine cluster region. Ser-88 is subject to Phosphoserine. Residues Ser-89 and Ser-92 each carry the diphosphoserine modification. Residues Ser-89 and Ser-92 each carry the phosphoserine; by CK2 modification. A Phosphoserine modification is found at Ser-93. Composition is skewed to low complexity over residues 123-135 (KAAAKASESSSSE) and 151-164 (QQKAAKPQAKAVRP). Over residues 172 to 188 (SESDSDSDSDSSSEEET) the composition is skewed to acidic residues. The Acidic serine cluster 3 repeat unit spans residues 176–187 (SDSDSDSSSEEE). Low complexity-rich tracts occupy residues 189-205 (PQTQKPKAAVAAKAQTK), 224-235 (KAAASSSSSSSS), 245-278 (AAPPKKTVPKKQVVAKAPVKVAAAPTQKSSSSED), and 308-329 (LPKKSPGTQAPKKAAAQTQPAD). Residues Lys-195 and Lys-201 each participate in a glycyl lysine isopeptide (Lys-Gly) (interchain with G-Cter in SUMO2) cross-link. The interaction with RPA194 stretch occupies residues 215-390 (KAQPKVANGK…EDEAPAKPVS (176 aa)). Acidic serine cluster repeat units follow at residues 232-241 (SSSSDDSEEE) and 273-284 (SSSSEDSSSEEE). Positions 330–342 (SSDDSSDDSDSSS) are enriched in acidic residues. One copy of the Acidic serine cluster 6 repeat lies at 334-345 (SSDDSDSSSEEE). Residues Lys-351 and Lys-356 each participate in a glycyl lysine isopeptide (Lys-Gly) (interchain with G-Cter in SUMO2) cross-link. The span at 353–362 (VVSKTPAKAA) shows a compositional bias: low complexity. A phosphoserine mark is found at Ser-371, Ser-372, and Ser-375. One copy of the Acidic serine cluster 7 repeat lies at 372 to 383 (SDSSDSDSSEDE). Glycyl lysine isopeptide (Lys-Gly) (interchain with G-Cter in SUMO2) cross-links involve residues Lys-396, Lys-402, Lys-407, and Lys-413. Polar residues predominate over residues 411 to 422 (TPKQPAGSNQKP). Lys-421 carries the post-translational modification N6-acetyllysine; alternate. Lys-421 participates in a covalent cross-link: Glycyl lysine isopeptide (Lys-Gly) (interchain with G-Cter in SUMO1); alternate. Lys-421 participates in a covalent cross-link: Glycyl lysine isopeptide (Lys-Gly) (interchain with G-Cter in SUMO2); alternate. The stretch at 431–442 (SSEEESSSSEEE) is one Acidic serine cluster 8 repeat. Over residues 431 to 443 (SSEEESSSSEEEE) the composition is skewed to acidic residues. Glycyl lysine isopeptide (Lys-Gly) (interchain with G-Cter in SUMO2) cross-links involve residues Lys-447 and Lys-459. Low complexity-rich tracts occupy residues 447-480 (KSATTPKAKVTAKAAPAKQAPQAAGDSSSDSDSS) and 514-525 (KSSSSSSSSSSE). Acidic serine cluster repeat units follow at residues 474 to 484 (SSDSDSSSSEE) and 521 to 531 (SSSSEDSSEEE). Positions 541–554 (PKIQASKANGTPAS) are enriched in polar residues. Residues 555–566 (LNGKAAKESEEE) form an Acidic serine cluster 11 repeat. Ser-563 is modified (phosphoserine). A compositionally biased stretch (acidic residues) spans 563 to 572 (SEEEEEEEET). A Glycyl lysine isopeptide (Lys-Gly) (interchain with G-Cter in SUMO1) cross-link involves residue Lys-575. Residue Lys-582 forms a Glycyl lysine isopeptide (Lys-Gly) (interchain with G-Cter in SUMO2) linkage. Ser-585 bears the Phosphoserine mark. A Phosphothreonine modification is found at Thr-594. Lys-607 participates in a covalent cross-link: Glycyl lysine isopeptide (Lys-Gly) (interchain with G-Cter in SUMO2). 2 positions are modified to phosphothreonine: Thr-610 and Thr-613. Lys-616 is covalently cross-linked (Glycyl lysine isopeptide (Lys-Gly) (interchain with G-Cter in SUMO2)). Ser-625 and Ser-646 each carry phosphoserine. A Glycyl lysine isopeptide (Lys-Gly) (interchain with G-Cter in SUMO2) cross-link involves residue Lys-650. Lys-666 carries the N6-acetyllysine; alternate modification. Lys-666 is covalently cross-linked (Glycyl lysine isopeptide (Lys-Gly) (interchain with G-Cter in SUMO2); alternate). Arg-686 carries the omega-N-methylarginine modification. A Phosphoserine modification is found at Ser-689. Lys-698 is covalently cross-linked (Glycyl lysine isopeptide (Lys-Gly) (interchain with G-Cter in SUMO2)). Ser-701 carries the phosphoserine modification.

It belongs to the NOLC1 family. Interacts with RNA polymerase I 194 kDa subunit (RPA194) and with casein kinase-II. Interacts with DKC1/NAP57, NOP58 and fibrillarin. Post-translationally, undergoes rapid and massive phosphorylation/dephosphorylation cycles on CK2 and PKC sites. NOLC1 is one of the mostly phosphorylated proteins in the cell. Pyrophosphorylated by 5-diphosphoinositol pentakisphosphate (5-IP7). Serine pyrophosphorylation is achieved by Mg(2+)-dependent, but enzyme independent transfer of a beta-phosphate from a inositol pyrophosphate to a pre-phosphorylated serine residue. In terms of processing, ubiquitinated. Monoubiquitination by the BCR(KBTBD8) complex promotes the formation of a NOLC1-TCOF1 complex that acts as a platform to connect RNA polymerase I with enzymes responsible for ribosomal processing and modification, leading to remodel the translational program of differentiating cells in favor of neural crest specification.

The protein resides in the nucleus. It is found in the nucleolus. Its subcellular location is the cytoplasm. In terms of biological role, nucleolar protein that acts as a regulator of RNA polymerase I by connecting RNA polymerase I with enzymes responsible for ribosomal processing and modification. Required for neural crest specification: following monoubiquitination by the BCR(KBTBD8) complex, associates with TCOF1 and acts as a platform to connect RNA polymerase I with enzymes responsible for ribosomal processing and modification, leading to remodel the translational program of differentiating cells in favor of neural crest specification. Involved in nucleologenesis, possibly by playing a role in the maintenance of the fundamental structure of the fibrillar center and dense fibrillar component in the nucleolus. It has intrinsic GTPase and ATPase activities. This chain is Nucleolar and coiled-body phosphoprotein 1, found in Mus musculus (Mouse).